The chain runs to 515 residues: Bifunctional purine biosynthesis protein PurH (515 aa).

The MGS-like domain occupies 1-145 (MTKRALISVS…KNHASVTVVV (145 aa)).

It belongs to the PurH family.

The enzyme catalyses (6R)-10-formyltetrahydrofolate + 5-amino-1-(5-phospho-beta-D-ribosyl)imidazole-4-carboxamide = 5-formamido-1-(5-phospho-D-ribosyl)imidazole-4-carboxamide + (6S)-5,6,7,8-tetrahydrofolate. The catalysed reaction is IMP + H2O = 5-formamido-1-(5-phospho-D-ribosyl)imidazole-4-carboxamide. Its pathway is purine metabolism; IMP biosynthesis via de novo pathway; 5-formamido-1-(5-phospho-D-ribosyl)imidazole-4-carboxamide from 5-amino-1-(5-phospho-D-ribosyl)imidazole-4-carboxamide (10-formyl THF route): step 1/1. It participates in purine metabolism; IMP biosynthesis via de novo pathway; IMP from 5-formamido-1-(5-phospho-D-ribosyl)imidazole-4-carboxamide: step 1/1. The chain is Bifunctional purine biosynthesis protein PurH from Streptococcus mutans serotype c (strain ATCC 700610 / UA159).